The chain runs to 164 residues: Thiol peroxidase (164 aa).

One can recognise a Thioredoxin domain in the interval L16 to I162. C58 serves as the catalytic Cysteine sulfenic acid (-SOH) intermediate. C58 and C92 are disulfide-bonded.

This sequence belongs to the peroxiredoxin family. Tpx subfamily. In terms of assembly, homodimer.

It carries out the reaction a hydroperoxide + [thioredoxin]-dithiol = an alcohol + [thioredoxin]-disulfide + H2O. In terms of biological role, thiol-specific peroxidase that catalyzes the reduction of hydrogen peroxide and organic hydroperoxides to water and alcohols, respectively. Plays a role in cell protection against oxidative stress by detoxifying peroxides. This is Thiol peroxidase from Streptococcus agalactiae serotype III (strain NEM316).